Reading from the N-terminus, the 556-residue chain is RING finger protein 207 (556 aa).

The RING-type zinc-finger motif lies at 25-64 (CPLCHAQYERPCLLDCFHEFCAGCLRGRAADGRLACPLCQ). Residues 93–145 (TEVVRCANCDLECGKQDAETTYFCNTCGQPLCARCRDETHRARMFARHDIVAL) form a B box-type; atypical zinc finger. 4 residues coordinate Zn(2+): cysteine 98, cysteine 101, cysteine 127, and histidine 132. 2 coiled-coil regions span residues 218-273 (TREA…NKAE) and 385-425 (FTEH…SLIK). A disordered region spans residues 517-556 (FQVPVDEPSDHPQNTHDDGVNAEAPARVSTLKPAMEKEVS). The segment covering 524–535 (PSDHPQNTHDDG) has biased composition (basic and acidic residues).

In terms of assembly, interacts with the core-glycosylated, but not the fully glycosylated form of KCNH2/HERG. Interacts with DNAJA1 and HSPA8. Interacts (via the C-terminus) with HSPA1A; this interaction additively increases KCNH2 expression.

It localises to the cytoplasm. In terms of biological role, plays a role in cardiac repolarization possibly by stabilizing membrane expression of the potassium channel KCNH2/HERG, or by assisting its synthesis, folding or export from the endoplasmic reticulum, in a heat shock protein-dependent manner. The chain is RING finger protein 207 (RNF207) from Bos taurus (Bovine).